The sequence spans 287 residues: Probable ketose 3-epimerase (287 aa).

Glu-152 serves as the catalytic Proton donor/acceptor. Mn(2+)-binding residues include Glu-152 and Asp-185. Residue His-188 coordinates substrate. His-211 is a Mn(2+) binding site. Position 217 (Arg-217) interacts with substrate. The active-site Proton donor/acceptor is the Glu-246. Glu-246 is a Mn(2+) binding site.

It belongs to the hyi family. Requires Mn(2+) as cofactor.

In terms of biological role, probably catalyzes the epimerization of ketopentoses and/or ketohexoses at the C3 position. The protein is Probable ketose 3-epimerase of Synechocystis sp. (strain ATCC 27184 / PCC 6803 / Kazusa).